The sequence spans 209 residues: Small ribosomal subunit protein uS3 (209 aa).

The KH type-2 domain occupies 17 to 86 (IDEYLEKELR…NPQIEVEEIK (70 aa)).

It belongs to the universal ribosomal protein uS3 family. In terms of assembly, part of the 30S ribosomal subunit.

Its function is as follows. Binds the lower part of the 30S subunit head. The polypeptide is Small ribosomal subunit protein uS3 (Thermococcus gammatolerans (strain DSM 15229 / JCM 11827 / EJ3)).